Consider the following 875-residue polypeptide: Alanine--tRNA ligase (875 aa).

Positions 565, 569, 666, and 670 each coordinate Zn(2+).

This sequence belongs to the class-II aminoacyl-tRNA synthetase family. Zn(2+) serves as cofactor.

It localises to the cytoplasm. It carries out the reaction tRNA(Ala) + L-alanine + ATP = L-alanyl-tRNA(Ala) + AMP + diphosphate. Catalyzes the attachment of alanine to tRNA(Ala) in a two-step reaction: alanine is first activated by ATP to form Ala-AMP and then transferred to the acceptor end of tRNA(Ala). Also edits incorrectly charged Ser-tRNA(Ala) and Gly-tRNA(Ala) via its editing domain. This is Alanine--tRNA ligase from Methylibium petroleiphilum (strain ATCC BAA-1232 / LMG 22953 / PM1).